A 113-amino-acid chain; its full sequence is Small ribosomal subunit protein uS14m (113 aa).

This sequence belongs to the universal ribosomal protein uS14 family. In terms of assembly, component of the mitochondrial small ribosomal subunit (mt-SSU). Mature N.crassa 74S mitochondrial ribosomes consist of a small (37S) and a large (54S) subunit. The 37S small subunit contains a 16S ribosomal RNA (16S mt-rRNA) and 32 different proteins. The 54S large subunit contains a 23S rRNA (23S mt-rRNA) and 42 different proteins.

The protein localises to the mitochondrion. In terms of biological role, component of the mitochondrial ribosome (mitoribosome), a dedicated translation machinery responsible for the synthesis of mitochondrial genome-encoded proteins, including at least some of the essential transmembrane subunits of the mitochondrial respiratory chain. The mitoribosomes are attached to the mitochondrial inner membrane and translation products are cotranslationally integrated into the membrane. The polypeptide is Small ribosomal subunit protein uS14m (mrp2) (Neurospora crassa (strain ATCC 24698 / 74-OR23-1A / CBS 708.71 / DSM 1257 / FGSC 987)).